The primary structure comprises 414 residues: Gamma-glutamyl phosphate reductase (414 aa).

Belongs to the gamma-glutamyl phosphate reductase family.

Its subcellular location is the cytoplasm. It carries out the reaction L-glutamate 5-semialdehyde + phosphate + NADP(+) = L-glutamyl 5-phosphate + NADPH + H(+). The protein operates within amino-acid biosynthesis; L-proline biosynthesis; L-glutamate 5-semialdehyde from L-glutamate: step 2/2. In terms of biological role, catalyzes the NADPH-dependent reduction of L-glutamate 5-phosphate into L-glutamate 5-semialdehyde and phosphate. The product spontaneously undergoes cyclization to form 1-pyrroline-5-carboxylate. The sequence is that of Gamma-glutamyl phosphate reductase from Xanthomonas campestris pv. campestris (strain 8004).